We begin with the raw amino-acid sequence, 248 residues long: 5'-nucleotidase SurE (248 aa).

4 residues coordinate a divalent metal cation: D8, D9, S39, and N91.

The protein belongs to the SurE nucleotidase family. A divalent metal cation serves as cofactor.

The protein resides in the cytoplasm. It carries out the reaction a ribonucleoside 5'-phosphate + H2O = a ribonucleoside + phosphate. Its function is as follows. Nucleotidase that shows phosphatase activity on nucleoside 5'-monophosphates. This Neisseria meningitidis serogroup C (strain 053442) protein is 5'-nucleotidase SurE.